We begin with the raw amino-acid sequence, 344 residues long: MSNTQLSYKDAGVDIHAGNELVERIKGDVKRTRRSEVMGGLGGFGALCALPTKYKEPILVSGTDGVGTKLRLAIDLKKHDTIGQDLVAMCVNDLIVQGAEPLFFLDYYATGKLDVDVAASVIKGIADGCEMSGCALVGGETAEMPGMYHEGDYDLAGFCVGVVEKSEIIDGTAVKTGDTLIALGSSGAHSNGYSLIRKVLEVSGANPTDLLEGKPLSEHFLAPTKIYVKSILQLIKQTEVHAIAHLTGGGFWENIPRVLPDNTKAVIDESSWQWPAIFNWLQEKGNISRYEMYRTFNCGVGMVIALPEKEVETALALLEQSGEKAWVIGKIEHLGEGEAQVEIQ.

Belongs to the AIR synthase family.

The protein localises to the cytoplasm. It carries out the reaction 2-formamido-N(1)-(5-O-phospho-beta-D-ribosyl)acetamidine + ATP = 5-amino-1-(5-phospho-beta-D-ribosyl)imidazole + ADP + phosphate + H(+). Its pathway is purine metabolism; IMP biosynthesis via de novo pathway; 5-amino-1-(5-phospho-D-ribosyl)imidazole from N(2)-formyl-N(1)-(5-phospho-D-ribosyl)glycinamide: step 2/2. The protein is Phosphoribosylformylglycinamidine cyclo-ligase of Haemophilus influenzae (strain PittGG).